The chain runs to 456 residues: Methylenetetrahydrofolate--tRNA-(uracil-5-)-methyltransferase TrmFO (456 aa).

An FAD-binding site is contributed by 11 to 16 (GGGLAG).

The protein belongs to the MnmG family. TrmFO subfamily. Requires FAD as cofactor.

The protein resides in the cytoplasm. The catalysed reaction is uridine(54) in tRNA + (6R)-5,10-methylene-5,6,7,8-tetrahydrofolate + NADH + H(+) = 5-methyluridine(54) in tRNA + (6S)-5,6,7,8-tetrahydrofolate + NAD(+). It carries out the reaction uridine(54) in tRNA + (6R)-5,10-methylene-5,6,7,8-tetrahydrofolate + NADPH + H(+) = 5-methyluridine(54) in tRNA + (6S)-5,6,7,8-tetrahydrofolate + NADP(+). Functionally, catalyzes the folate-dependent formation of 5-methyl-uridine at position 54 (M-5-U54) in all tRNAs. This Synechocystis sp. (strain ATCC 27184 / PCC 6803 / Kazusa) protein is Methylenetetrahydrofolate--tRNA-(uracil-5-)-methyltransferase TrmFO.